Consider the following 456-residue polypeptide: Exodeoxyribonuclease 7 large subunit (456 aa).

Belongs to the XseA family. In terms of assembly, heterooligomer composed of large and small subunits.

The protein localises to the cytoplasm. It carries out the reaction Exonucleolytic cleavage in either 5'- to 3'- or 3'- to 5'-direction to yield nucleoside 5'-phosphates.. Functionally, bidirectionally degrades single-stranded DNA into large acid-insoluble oligonucleotides, which are then degraded further into small acid-soluble oligonucleotides. The polypeptide is Exodeoxyribonuclease 7 large subunit (Escherichia coli (strain ATCC 8739 / DSM 1576 / NBRC 3972 / NCIMB 8545 / WDCM 00012 / Crooks)).